The sequence spans 130 residues: Fumarate reductase subunit C (130 aa).

The next 3 helical transmembrane spans lie at 30-50 (EGTS…VFAL), 60-80 (FVSF…LFAA), and 110-130 (IKAL…VALL).

The protein belongs to the FrdC family. As to quaternary structure, part of an enzyme complex containing four subunits: a flavoprotein (FrdA), an iron-sulfur protein (FrdB), and two hydrophobic anchor proteins (FrdC and FrdD).

The protein localises to the cell inner membrane. In terms of biological role, two distinct, membrane-bound, FAD-containing enzymes are responsible for the catalysis of fumarate and succinate interconversion; fumarate reductase is used in anaerobic growth, and succinate dehydrogenase is used in aerobic growth. Anchors the catalytic components of the fumarate reductase complex to the cell inner membrane, binds quinones. This is Fumarate reductase subunit C from Yersinia pseudotuberculosis serotype O:1b (strain IP 31758).